Reading from the N-terminus, the 2157-residue chain is Polyketide synthase 2 (2157 aa).

Residues 7-244 form an N-terminal acylcarrier protein transacylase domain (SAT) region; sequence FIFGDQTGGF…IPIPIWAPYH (238 aa). Positions 374–807 constitute a Ketosynthase family 3 (KS3) domain; sequence DSKIAIIGMS…GGNSALLLED (434 aa). Catalysis depends on for beta-ketoacyl synthase activity residues Cys-546, His-681, and His-723. The interval 908 to 1213 is malonyl-CoA:ACP transacylase (MAT) domain; sequence GFVFSGQGAQ…ASLHRKDDGW (306 aa). Catalysis depends on Ser-998, which acts as the For acyl/malonyl transferase activity. Positions 1290 to 1605 are product template (PT) domain; the sequence is TSSVQKIIRQ…RSLLNKVLPP (316 aa). Residues 1294–1428 form an N-terminal hotdog fold region; sequence QKIIRQTDGP…CLLRFADPTS (135 aa). The PKS/mFAS DH domain occupies 1294–1600; the sequence is QKIIRQTDGP…FLGMSRSLLN (307 aa). The active-site Proton acceptor; for dehydratase activity is the His-1327. The interval 1455 to 1600 is C-terminal hotdog fold; sequence TDSLLSRGIV…FLGMSRSLLN (146 aa). Asp-1514 functions as the Proton donor; for dehydratase activity in the catalytic mechanism. Residues 1626-1652 form a disordered region; the sequence is AASAKDTERRPLDIPTRAQRQPSSAQT. A compositionally biased stretch (polar residues) spans 1643 to 1652; the sequence is AQRQPSSAQT. The 78-residue stretch at 1649–1726 folds into the Carrier 1 domain; that stretch reads SAQTGTMGRI…ELKAFLGADQ (78 aa). Ser-1686 carries the O-(pantetheine 4'-phosphoryl)serine modification. A disordered region spans residues 1733–1762; the sequence is ACESSNGQHTPQTSDKGSGTLAVQKTDDDT. Over residues 1735–1755 the composition is skewed to polar residues; the sequence is ESSNGQHTPQTSDKGSGTLAV. The 75-residue stretch at 1765-1839 folds into the Carrier 2 domain; that stretch reads DMTLNRVCAI…SLQKALCGSE (75 aa). Ser-1799 bears the O-(pantetheine 4'-phosphoryl)serine mark. A disordered region spans residues 1840 to 1859; that stretch reads AASNGAPEANETTPSSHRLE. Positions 1875–2151 are thioesterase (TE) domain; sequence ASPPHATSIL…MIEMGNLIGE (277 aa). Ser-1981 functions as the For thioesterase activity in the catalytic mechanism.

Its function is as follows. Polyketide synthase; part of the Pks2 gene cluster that mediates the formation of infectious structures (appressoria), enabling these fungi to kill insects faster. The product of the Pks2 gene cluster is different from the one of Pks1 and has still not been identified. This Metarhizium robertsii (strain ARSEF 23 / ATCC MYA-3075) (Metarhizium anisopliae (strain ARSEF 23)) protein is Polyketide synthase 2.